The sequence spans 330 residues: Electron transfer flavoprotein subunit alpha (330 aa).

FAD is bound at residue 270 to 298 (LYIACGISGAIQHLAGMSNSGTIVAINKN).

It belongs to the ETF alpha-subunit/FixB family. In terms of assembly, heterodimer of an alpha and a beta subunit. The cofactor is FAD.

The electron transfer flavoprotein serves as a specific electron acceptor for other dehydrogenases. It transfers the electrons to the main respiratory chain via ETF-ubiquinone oxidoreductase (ETF dehydrogenase). The sequence is that of Electron transfer flavoprotein subunit alpha (etfA) from Thermoanaerobacterium thermosaccharolyticum (strain ATCC 7956 / DSM 571 / NCIMB 9385 / NCA 3814 / NCTC 13789 / WDCM 00135 / 2032) (Clostridium thermosaccharolyticum).